The primary structure comprises 323 residues: Transmembrane protein 171 (323 aa).

Transmembrane regions (helical) follow at residues 22–42, 57–77, 112–132, and 159–179; these read IFFLFVFGAVLLCVGVLISIF, MVLKIAGPSCAVMGLGTVILA, LIFGFLFLTSGMLISILGIWV, and FLSLQIMGPLIVLVGLCFFVV. Residues 251–268 are compositionally biased toward polar residues; sequence YSSLFNLSRTPTPENQGA. The interval 251–323 is disordered; that stretch reads YSSLFNLSRT…LGAPSESSPP (73 aa). The span at 281–290 shows a compositional bias: low complexity; that stretch reads SGPGSSSESS.

The protein localises to the membrane. This Rattus norvegicus (Rat) protein is Transmembrane protein 171 (Tmem171).